We begin with the raw amino-acid sequence, 239 residues long: Demethylmenaquinone methyltransferase (239 aa).

Residues Thr-60, Asp-81, and 106–107 each bind S-adenosyl-L-methionine; that span reads DA.

This sequence belongs to the class I-like SAM-binding methyltransferase superfamily. MenG/UbiE family.

The catalysed reaction is a 2-demethylmenaquinol + S-adenosyl-L-methionine = a menaquinol + S-adenosyl-L-homocysteine + H(+). It functions in the pathway quinol/quinone metabolism; menaquinone biosynthesis; menaquinol from 1,4-dihydroxy-2-naphthoate: step 2/2. Methyltransferase required for the conversion of demethylmenaquinol (DMKH2) to menaquinol (MKH2). This is Demethylmenaquinone methyltransferase from Staphylococcus haemolyticus (strain JCSC1435).